A 318-amino-acid polypeptide reads, in one-letter code: 2-keto-3-deoxygluconate permease (318 aa).

10 helical membrane-spanning segments follow: residues Leu-10–Pro-30, Gly-42–Ile-62, Ile-82–Pro-102, Leu-109–Leu-129, Ala-139–Gly-159, Leu-163–Ala-183, Phe-194–Leu-214, Ala-224–Ala-244, Val-257–Ala-277, and Ala-289–Tyr-309.

It belongs to the KdgT transporter family.

The protein localises to the cell inner membrane. It catalyses the reaction 2-dehydro-3-deoxy-D-gluconate(in) + H(+)(in) = 2-dehydro-3-deoxy-D-gluconate(out) + H(+)(out). Functionally, catalyzes the proton-dependent uptake of 2-keto-3-deoxygluconate (KDG) into the cell. This Xanthomonas euvesicatoria pv. vesicatoria (strain 85-10) (Xanthomonas campestris pv. vesicatoria) protein is 2-keto-3-deoxygluconate permease.